Reading from the N-terminus, the 250-residue chain is Indole-3-glycerol phosphate synthase (250 aa).

Belongs to the TrpC family.

The enzyme catalyses 1-(2-carboxyphenylamino)-1-deoxy-D-ribulose 5-phosphate + H(+) = (1S,2R)-1-C-(indol-3-yl)glycerol 3-phosphate + CO2 + H2O. It functions in the pathway amino-acid biosynthesis; L-tryptophan biosynthesis; L-tryptophan from chorismate: step 4/5. The chain is Indole-3-glycerol phosphate synthase from Metallosphaera sedula (strain ATCC 51363 / DSM 5348 / JCM 9185 / NBRC 15509 / TH2).